The following is a 418-amino-acid chain: Histidinol dehydrogenase (418 aa).

Positions 119, 180, and 203 each coordinate NAD(+). The substrate site is built by threonine 226, glutamine 248, and histidine 251. Residues glutamine 248 and histidine 251 each coordinate Zn(2+). Active-site proton acceptor residues include glutamate 316 and histidine 317. Residues histidine 317, aspartate 350, glutamate 404, and histidine 409 each coordinate substrate. Aspartate 350 is a binding site for Zn(2+). Histidine 409 is a Zn(2+) binding site.

This sequence belongs to the histidinol dehydrogenase family. The cofactor is Zn(2+).

It catalyses the reaction L-histidinol + 2 NAD(+) + H2O = L-histidine + 2 NADH + 3 H(+). Its pathway is amino-acid biosynthesis; L-histidine biosynthesis; L-histidine from 5-phospho-alpha-D-ribose 1-diphosphate: step 9/9. Catalyzes the sequential NAD-dependent oxidations of L-histidinol to L-histidinaldehyde and then to L-histidine. The polypeptide is Histidinol dehydrogenase (Staphylococcus aureus (strain COL)).